Reading from the N-terminus, the 433-residue chain is Cell division protein FtsZ homolog 1, chloroplastic (433 aa).

The transit peptide at 1 to 66 (MAIIPLAQLN…TRSKSMRLRC (66 aa)) directs the protein to the chloroplast. N-acetylserine is present on serine 67. GTP contacts are provided by residues 83–87 (GGGNN), 170–172 (GTG), glutamate 201, arginine 205, and aspartate 249. Positions 399–433 (GSSGQQENKGMSLPHQKQSPSTISTKSSSPRRLFF) are disordered. The segment covering 414–433 (QKQSPSTISTKSSSPRRLFF) has biased composition (low complexity).

Belongs to the FtsZ family. In terms of assembly, aggregates to form a contractile ring-like structure; contraction of the ring was accompanied by an increase in the filament turnover rate. This aggregation is regulated in midchloroplast stroma by MIND1 (repressor) and MINE1 (promoter). Self-interacts and binds to FTSZ2-1 in heteromers to form two morphologically distinct types of filaments, termed type-I (smooth filaments) and type-II (rough filaments), in a GTP-dependent manner. Interacts with ARC3. Part of a complex made of ARC3, ARC6, FTSZ1 and FTSZ2. In pollen grain, restricted to plastids of vegetative cells. Also present in pollen tubes plastids.

The protein localises to the plastid. Its subcellular location is the chloroplast stroma. It localises to the chloroplast thylakoid membrane. Its function is as follows. Exhibits GTPase activity. Component of the plastid division machinery that forms a contractile ring at the division site. Required for plastid division in a dose-dependent manner. Involved in epidermal plastids division in a MINE1-dependent manner. Involved in blue light-induced chloroplast movements. May regulate thylakoid development. In the vegetative shoot apex, at the shoot apical meristem (SAM), where the proplastid-to-chloroplast transition takes place, contributes equally with FTSZ2-1 in the L2 layer to plastid division. The protein is Cell division protein FtsZ homolog 1, chloroplastic of Arabidopsis thaliana (Mouse-ear cress).